Here is a 149-residue protein sequence, read N- to C-terminus: Urease accessory protein UreE (149 aa).

It belongs to the UreE family.

The protein localises to the cytoplasm. In terms of biological role, involved in urease metallocenter assembly. Binds nickel. Probably functions as a nickel donor during metallocenter assembly. The polypeptide is Urease accessory protein UreE (Ureaplasma parvum serovar 3 (strain ATCC 700970)).